The chain runs to 407 residues: MNVAQIKKVVLAFSGGLDTSVILKWLQDTYRCEVVTFTADIGQGEEVEPARAKAKQLGVREIFIDDLREEFVRDFVFPMFRANTLYEGEYLLGTSIARPLIAKRQIEIARETGADAVSHGATGKGNDQVRFELGYYALQPDIRVIAPWREWDLTSREKLLKYAEQHGIPVEMKKKEGSPYSMDANLLHISYEGRILEDPAQEPEESMWRWSVSPEKAPDSPEYLDLEFRQGDIVALDGEELSPARLLARLNELGGKHGIGRLDLVENRYVGMKSRGCYETPGGTIMLRAHRAMESITLDREVAHLKDELMPRYAELIYNGYWWSPERRMMQTMIDASQAHVNGWVRVKLYKGNVIVVGRDSKTDSLFDPHIATFEDDQGAYNQMDAAGFIKLNALRMRIAANLRNRK.

ATP-binding positions include 12–20 and Ala-39; that span reads AFSGGLDTS. 2 residues coordinate L-citrulline: Tyr-90 and Ser-95. Gly-120 lines the ATP pocket. L-aspartate is bound by residues Thr-122, Asn-126, and Asp-127. Asn-126 is a binding site for L-citrulline. Positions 130, 181, 190, 266, and 278 each coordinate L-citrulline.

Belongs to the argininosuccinate synthase family. Type 1 subfamily. Homotetramer.

It localises to the cytoplasm. It catalyses the reaction L-citrulline + L-aspartate + ATP = 2-(N(omega)-L-arginino)succinate + AMP + diphosphate + H(+). It participates in amino-acid biosynthesis; L-arginine biosynthesis; L-arginine from L-ornithine and carbamoyl phosphate: step 2/3. The polypeptide is Argininosuccinate synthase (Nitrosospira multiformis (strain ATCC 25196 / NCIMB 11849 / C 71)).